We begin with the raw amino-acid sequence, 93 residues long: Small ribosomal subunit protein uS19 (93 aa).

Belongs to the universal ribosomal protein uS19 family.

Protein S19 forms a complex with S13 that binds strongly to the 16S ribosomal RNA. The polypeptide is Small ribosomal subunit protein uS19 (Oenococcus oeni (strain ATCC BAA-331 / PSU-1)).